The primary structure comprises 391 residues: Ferrochelatase (391 aa).

2 residues coordinate Fe cation: His-196 and Glu-281.

This sequence belongs to the ferrochelatase family.

The protein localises to the cytoplasm. It carries out the reaction heme b + 2 H(+) = protoporphyrin IX + Fe(2+). Its pathway is porphyrin-containing compound metabolism; protoheme biosynthesis; protoheme from protoporphyrin-IX: step 1/1. Catalyzes the ferrous insertion into protoporphyrin IX. The protein is Ferrochelatase of Prochlorococcus marinus (strain MIT 9515).